Consider the following 92-residue polypeptide: Small ribosomal subunit protein bS20 (92 aa).

The tract at residues 1–25 (MANSAQARKRARQAAKANSHNSALR) is disordered.

Belongs to the bacterial ribosomal protein bS20 family.

Binds directly to 16S ribosomal RNA. The protein is Small ribosomal subunit protein bS20 of Burkholderia mallei (strain NCTC 10247).